The chain runs to 390 residues: Lipoyl synthase, mitochondrial (390 aa).

Residues 1-19 (MPTLLRILRPPRSPFTRCL) constitute a mitochondrion transit peptide. Positions 23 to 48 (ATPSSSGSSSRSKFTESLETGPGLDD) are disordered. 7 residues coordinate [4Fe-4S] cluster: Cys-98, Cys-103, Cys-109, Cys-136, Cys-140, Cys-143, and Ser-350. The region spanning 119 to 339 (AEGRSAATAT…KEVAENLGFL (221 aa)) is the Radical SAM core domain.

It belongs to the radical SAM superfamily. Lipoyl synthase family. [4Fe-4S] cluster is required as a cofactor.

Its subcellular location is the mitochondrion. It carries out the reaction [[Fe-S] cluster scaffold protein carrying a second [4Fe-4S](2+) cluster] + N(6)-octanoyl-L-lysyl-[protein] + 2 oxidized [2Fe-2S]-[ferredoxin] + 2 S-adenosyl-L-methionine + 4 H(+) = [[Fe-S] cluster scaffold protein] + N(6)-[(R)-dihydrolipoyl]-L-lysyl-[protein] + 4 Fe(3+) + 2 hydrogen sulfide + 2 5'-deoxyadenosine + 2 L-methionine + 2 reduced [2Fe-2S]-[ferredoxin]. It participates in protein modification; protein lipoylation via endogenous pathway; protein N(6)-(lipoyl)lysine from octanoyl-[acyl-carrier-protein]: step 2/2. Catalyzes the radical-mediated insertion of two sulfur atoms into the C-6 and C-8 positions of the octanoyl moiety bound to the lipoyl domains of lipoate-dependent enzymes, thereby converting the octanoylated domains into lipoylated derivatives. This is Lipoyl synthase, mitochondrial from Laccaria bicolor (strain S238N-H82 / ATCC MYA-4686) (Bicoloured deceiver).